The sequence spans 961 residues: Phosphofurin acidic cluster sorting protein 1 (961 aa).

A compositionally biased stretch (gly residues) spans 1-19 (MAERGGAGGGPGGSGGGSS). Disordered stretches follow at residues 1 to 70 (MAER…SSST) and 76 to 95 (VAVA…RTPA). Residue A2 is modified to N-acetylalanine. Over residues 20 to 34 (QRGSGVAQSPQQQPQ) the composition is skewed to low complexity. The residue at position 28 (S28) is a Phosphoserine. Residues 35–46 (QQPPQPQQPTPP) are compositionally biased toward pro residues. A Phosphothreonine modification is found at T44. A compositionally biased stretch (low complexity) spans 51–70 (ATSSSSSTSAAAASSSSSST). Y249 is modified (phosphotyrosine). Over residues 260–271 (GIKSKLSDRSPD) the composition is skewed to basic and acidic residues. 2 disordered regions span residues 260 to 297 (GIKS…LHGQ) and 375 to 426 (NPSD…GKDT). Positions 274–291 (NYSEEEEESFSSEQEGSD) are enriched in acidic residues. Positions 351–375 (HVSREQIREVEEDLDELYDSLEMYN) form a coiled coil. A phosphoserine mark is found at S377 and S379. The span at 404 to 426 (MSQSSSQTEIGSLNSKGSLGKDT) shows a compositional bias: polar residues. A phosphoserine mark is found at S428 and S493. Disordered stretches follow at residues 475 to 540 (EKVK…HSTQ) and 758 to 802 (SPST…SMSS). Position 502 is a phosphothreonine (T502). A phosphoserine mark is found at S517, S526, S527, S529, and S532. A compositionally biased stretch (low complexity) spans 768–802 (SPVVSLTVPSTSPPSSSGLSRDATATPPSSPSMSS).

This sequence belongs to the PACS family. Associates with AP-1 and AP-3 but not with AP-2 complexes. Interacts with FURIN. Forms a ternary complex with FURIN and AP-1. Interacts with PKD2 (via acidic region). Interacts with SORL1. Interacts with WDR37.

The protein localises to the golgi apparatus. It localises to the trans-Golgi network. Its function is as follows. Coat protein that is involved in the localization of trans-Golgi network (TGN) membrane proteins that contain acidic cluster sorting motifs. Controls the endosome-to-Golgi trafficking of furin and mannose-6-phosphate receptor by connecting the acidic-cluster-containing cytoplasmic domain of these molecules with the adapter-protein complex-1 (AP-1) of endosomal clathrin-coated membrane pits. Required for normal ER Ca2+ handling in lymphocytes. Together with WDR37, it plays an essential role in lymphocyte development, quiescence and survival. Required for stabilizing peripheral lymphocyte populations. This chain is Phosphofurin acidic cluster sorting protein 1 (Pacs1), found in Mus musculus (Mouse).